The following is a 396-amino-acid chain: Cellular tumor antigen p53 (396 aa).

Residues 1–44 (MADLAENVSLPLSQESFEDLWKMNLNLVAVQPPETESWVGYDNF) are transcription activation (acidic). Positions 63–89 (ATEPAPQPSISTLDTGSPPTSTVPTTS) are disordered. Residues 77–89 (TGSPPTSTVPTTS) are compositionally biased toward low complexity. The DNA-binding element occupies 90 to 281 (DYPGALGFQL…KTEEINLKKQ (192 aa)). Positions 164, 167, 227, and 231 each coordinate Zn(2+). The tract at residues 262-269 (RVCACPGR) is interaction with DNA. Residues 297-317 (KRAMKEASLPAPQPGASKKTK) carry the Bipartite nuclear localization signal motif. The interval 301–322 (KEASLPAPQPGASKKTKSSPAV) is disordered. The oligomerization stretch occupies residues 325–356 (DEIYTLQIRGKEKYEMLKKFNDSLELSELVPV). The Nuclear export signal signature appears at 339 to 350 (EMLKKFNDSLEL). The segment at 369 to 392 (KRVAKRDFGVGPKKRKKLLVKEEK) is basic (repression of DNA-binding).

The protein belongs to the p53 family. As to quaternary structure, binds DNA as a homotetramer. It depends on Zn(2+) as a cofactor.

Its subcellular location is the cytoplasm. The protein resides in the nucleus. Multifunctional transcription factor that induces cell cycle arrest, DNA repair or apoptosis upon binding to its target DNA sequence. Acts as a tumor suppressor in many tumor types; induces growth arrest or apoptosis depending on the physiological circumstances and cell type. Negatively regulates cell division by controlling expression of a set of genes required for this process. One of the activated genes is an inhibitor of cyclin-dependent kinases. Apoptosis induction seems to be mediated either by stimulation of BAX and FAS antigen expression, or by repression of Bcl-2 expression. The sequence is that of Cellular tumor antigen p53 (tp53) from Oncorhynchus mykiss (Rainbow trout).